We begin with the raw amino-acid sequence, 222 residues long: Large ribosomal subunit protein mL64 (222 aa).

Disordered stretches follow at residues 14 to 40 (LTAT…PWWP) and 188 to 222 (KRLK…APSS). A coiled-coil region spans residues 144 to 213 (EKAQADKERR…AALAAAAAQD (70 aa)). The Nuclear localization signal signature appears at 184 to 200 (KKERKRLKEEKQRQKQE). Positions 188 to 201 (KRLKEEKQRQKQEA) are enriched in basic and acidic residues. Over residues 202–216 (RAAALAAAAAQDPAA) the composition is skewed to low complexity.

This sequence belongs to the mitochondrion-specific ribosomal protein mL64 family. Component of the mitochondrial ribosome large subunit (39S) which comprises a 16S rRNA and about 50 distinct proteins. Interacts with GADD45A, GADD45B and GADD45G. Interacts with NR4A1 via the NR4A1 AB domain. Interacts with ATAD3A and ATAD3B.

The protein resides in the mitochondrion. It localises to the nucleus. Functionally, acts as a negative regulator of G1 to S cell cycle phase progression by inhibiting cyclin-dependent kinases. Inhibitory effects are additive with GADD45 proteins but also occur in the absence of GADD45 proteins. Acts as a repressor of the orphan nuclear receptor NR4A1 by inhibiting AB domain-mediated transcriptional activity. May be involved in the hormone-mediated regulation of NR4A1 transcriptional activity. May play a role in mitochondrial protein synthesis. This is Large ribosomal subunit protein mL64 (GADD45GIP1) from Chlorocebus aethiops (Green monkey).